Consider the following 366-residue polypeptide: S-adenosylmethionine:tRNA ribosyltransferase-isomerase (366 aa).

Belongs to the QueA family. Monomer.

The protein localises to the cytoplasm. It catalyses the reaction 7-aminomethyl-7-carbaguanosine(34) in tRNA + S-adenosyl-L-methionine = epoxyqueuosine(34) in tRNA + adenine + L-methionine + 2 H(+). Its pathway is tRNA modification; tRNA-queuosine biosynthesis. Transfers and isomerizes the ribose moiety from AdoMet to the 7-aminomethyl group of 7-deazaguanine (preQ1-tRNA) to give epoxyqueuosine (oQ-tRNA). The polypeptide is S-adenosylmethionine:tRNA ribosyltransferase-isomerase (Caulobacter vibrioides (strain ATCC 19089 / CIP 103742 / CB 15) (Caulobacter crescentus)).